A 623-amino-acid polypeptide reads, in one-letter code: MAKLEQYFDYVKINLASPERIRKWGERTLPNGQIVGEVTKPETINYRTLKPEMDGLFCERIFGPVKDWECHCGKYKRVRYKGIICERCGVEVAESKVRRHRMGHIELAAPVTHVWYLKSLPSYISILLDIPLKDVEQIVYFNSYIVTRPGNCPNLRYKQLLSEDEWIEIEDQLYQEDSNLYGVEVGIGAEAIQKLLKDVDLEVEAESLREDVLSAKGSKRDKAIKRLRVIDNFIATRSDPAWMILTVLPVIPPDLRPMVQLDGGRFATSDLNDLYRRVLNRNNRLIRLQEILAPEIIIRNEKRMLQESVDALIDNGRRGRTVVGANNRPLKSLSDIIEGKQGRFRQNLLGKRVDYSGRSVIVVGPTLQLNQCGLPREMALELFQPFVIHKLIHQGLVNNIKAAKKMIQKNDSVIWSVLEEVIQGHPVLLNRAPTLHRLGIQAFEPILVEGRAIKLHPLVCPAFNADFDGDQMAVHIPLSLEAQAEARLLMLAPYNFLSPATGEPIIMPSQDMVLGCYYLTTHNPSQQKSQAYYFSNLEDALLAYECKKIALHSYVWVRFEGEVEDENLKIRTSILKEKYTLDIFTERIIKTDEEKKVIAQYILTTPGRILLNKTLFDSLTLSN.

C70, C72, C85, and C88 together coordinate Zn(2+). Mg(2+) contacts are provided by D466, D468, and D470.

It belongs to the RNA polymerase beta' chain family. RpoC1 subfamily. In terms of assembly, in plastids the minimal PEP RNA polymerase catalytic core is composed of four subunits: alpha, beta, beta', and beta''. When a (nuclear-encoded) sigma factor is associated with the core the holoenzyme is formed, which can initiate transcription. Requires Mg(2+) as cofactor. Zn(2+) is required as a cofactor.

The protein resides in the plastid. Its subcellular location is the chloroplast. It carries out the reaction RNA(n) + a ribonucleoside 5'-triphosphate = RNA(n+1) + diphosphate. DNA-dependent RNA polymerase catalyzes the transcription of DNA into RNA using the four ribonucleoside triphosphates as substrates. The sequence is that of DNA-directed RNA polymerase subunit beta' from Rhodomonas salina (Cryptomonas salina).